The chain runs to 73 residues: Large ribosomal subunit protein bL31 (73 aa).

Residues C16, C18, C37, and C40 each contribute to the Zn(2+) site.

The protein belongs to the bacterial ribosomal protein bL31 family. Type A subfamily. As to quaternary structure, part of the 50S ribosomal subunit. The cofactor is Zn(2+).

In terms of biological role, binds the 23S rRNA. The protein is Large ribosomal subunit protein bL31 of Pseudomonas savastanoi pv. phaseolicola (strain 1448A / Race 6) (Pseudomonas syringae pv. phaseolicola (strain 1448A / Race 6)).